Reading from the N-terminus, the 162-residue chain is 2-C-methyl-D-erythritol 2,4-cyclodiphosphate synthase (162 aa).

Residues Asp-10 and His-12 each contribute to the a divalent metal cation site. 4-CDP-2-C-methyl-D-erythritol 2-phosphate-binding positions include 10–12 (DVH) and 36–37 (HS). Residue His-44 participates in a divalent metal cation binding. Residues 58 to 60 (DIG), 63 to 67 (FPDTD), 102 to 108 (AQAPRMA), 134 to 137 (TTSE), Phe-141, and Arg-144 each bind 4-CDP-2-C-methyl-D-erythritol 2-phosphate.

The protein belongs to the IspF family. As to quaternary structure, homotrimer. The cofactor is a divalent metal cation.

It catalyses the reaction 4-CDP-2-C-methyl-D-erythritol 2-phosphate = 2-C-methyl-D-erythritol 2,4-cyclic diphosphate + CMP. It functions in the pathway isoprenoid biosynthesis; isopentenyl diphosphate biosynthesis via DXP pathway; isopentenyl diphosphate from 1-deoxy-D-xylulose 5-phosphate: step 4/6. Involved in the biosynthesis of isopentenyl diphosphate (IPP) and dimethylallyl diphosphate (DMAPP), two major building blocks of isoprenoid compounds. Catalyzes the conversion of 4-diphosphocytidyl-2-C-methyl-D-erythritol 2-phosphate (CDP-ME2P) to 2-C-methyl-D-erythritol 2,4-cyclodiphosphate (ME-CPP) with a corresponding release of cytidine 5-monophosphate (CMP). The chain is 2-C-methyl-D-erythritol 2,4-cyclodiphosphate synthase from Chromohalobacter salexigens (strain ATCC BAA-138 / DSM 3043 / CIP 106854 / NCIMB 13768 / 1H11).